The sequence spans 272 residues: MEMFDNIKNVGKLIRLERIFDKKSEKTVIIPMDHGVSSGPLDGIKDMRITTNAVADGGANAVLGHKGLVRHGHRGYGRDIGLIIHMSAGTSISPDPNKKVIVTTVEDAMRMGADAVSLHVNVGAESDFEMYRDLGLISETCEHWGMPLIAMMYPRGPKIKDEKDPEVVAHAARLGAELGADIIKTNYTGDPDTFKEVVKGCPAPIVIAGGPKTNTDEEFLQMVKDAMHAGGKGVASGRNVFQHKDVKGITSAICKIVHEDVEVEEALKEIKI.

Asp33 functions as the Proton acceptor in the catalytic mechanism. Residues 33–37 (DHGVS) and 153–155 (YPR) contribute to the 1-deoxy-D-threo-hexo-2,5-diulose 6-phosphate site. The active-site Proton donor is Tyr153. Lys184 acts as the Schiff-base intermediate with substrate in catalysis. Residues 209 to 210 (GG) and 237 to 238 (GR) contribute to the 1-deoxy-D-threo-hexo-2,5-diulose 6-phosphate site.

Belongs to the DeoC/FbaB aldolase family. ADHS subfamily. As to quaternary structure, homodecamer.

It catalyses the reaction 1-deoxy-D-threo-hexo-2,5-diulose 6-phosphate + L-aspartate 4-semialdehyde = 2,3-dioxopropyl phosphate + 2-amino-2,3,7-trideoxy-D-lyxo-hept-6-ulosonate. Its function is as follows. Catalyzes a transaldol reaction between 6-deoxy-5-ketofructose 1-phosphate (DKFP) and L-aspartate semialdehyde (ASA) with an elimination of hydroxypyruvaldehyde phosphate to yield 2-amino-3,7-dideoxy-D-threo-hept-6-ulosonate (ADH). Plays a key role in an alternative pathway of the biosynthesis of 3-dehydroquinate (DHQ), which is involved in the canonical pathway for the biosynthesis of aromatic amino acids and which is also a precursor for the biosynthesis of p-aminobenzoic acid (PABA) in M.maripaludis. Does not possess fructose-bisphosphate (FBP) aldolase activity. The sequence is that of 2-amino-3,7-dideoxy-D-threo-hept-6-ulosonate synthase from Methanococcus maripaludis (strain DSM 14266 / JCM 13030 / NBRC 101832 / S2 / LL).